The chain runs to 420 residues: Probable glucuronosyltransferase Os04g0398600 (420 aa).

Over 1 to 4 the chain is Cytoplasmic; sequence MGSR. The helical; Signal-anchor for type II membrane protein transmembrane segment at 5 to 25 threads the bilayer; sequence TVGWWLLAAAVVLAAAAADSG. The Lumenal portion of the chain corresponds to 26 to 420; the sequence is EAERAAEQHS…AGPVGDLKAW (395 aa). Residues Asn-147 and Asn-408 are each glycosylated (N-linked (GlcNAc...) asparagine).

Belongs to the glycosyltransferase 47 family.

The protein resides in the golgi apparatus membrane. In terms of biological role, involved in the synthesis of glucuronoxylan hemicellulose in secondary cell walls. This Oryza sativa subsp. japonica (Rice) protein is Probable glucuronosyltransferase Os04g0398600.